Consider the following 421-residue polypeptide: Gamma-glutamyl phosphate reductase (421 aa).

It belongs to the gamma-glutamyl phosphate reductase family.

It localises to the cytoplasm. The catalysed reaction is L-glutamate 5-semialdehyde + phosphate + NADP(+) = L-glutamyl 5-phosphate + NADPH + H(+). It participates in amino-acid biosynthesis; L-proline biosynthesis; L-glutamate 5-semialdehyde from L-glutamate: step 2/2. Catalyzes the NADPH-dependent reduction of L-glutamate 5-phosphate into L-glutamate 5-semialdehyde and phosphate. The product spontaneously undergoes cyclization to form 1-pyrroline-5-carboxylate. The chain is Gamma-glutamyl phosphate reductase from Acinetobacter baumannii (strain SDF).